We begin with the raw amino-acid sequence, 376 residues long: Erythronate-4-phosphate dehydrogenase (376 aa).

Ser45 and Thr67 together coordinate substrate. Asp147 provides a ligand contact to NAD(+). Arg209 is a catalytic residue. Position 233 (Asp233) interacts with NAD(+). Glu238 is an active-site residue. His255 serves as the catalytic Proton donor. Gly258 lines the NAD(+) pocket. A substrate-binding site is contributed by Tyr259.

The protein belongs to the D-isomer specific 2-hydroxyacid dehydrogenase family. PdxB subfamily. In terms of assembly, homodimer.

The protein resides in the cytoplasm. The catalysed reaction is 4-phospho-D-erythronate + NAD(+) = (R)-3-hydroxy-2-oxo-4-phosphooxybutanoate + NADH + H(+). Its pathway is cofactor biosynthesis; pyridoxine 5'-phosphate biosynthesis; pyridoxine 5'-phosphate from D-erythrose 4-phosphate: step 2/5. Its function is as follows. Catalyzes the oxidation of erythronate-4-phosphate to 3-hydroxy-2-oxo-4-phosphonooxybutanoate. In Shewanella baltica (strain OS185), this protein is Erythronate-4-phosphate dehydrogenase.